Here is a 265-residue protein sequence, read N- to C-terminus: Undecaprenyl-diphosphatase (265 aa).

Helical transmembrane passes span 1–21 (MDIF…FLPI), 39–59 (QGVG…VLYF), 84–104 (ALAW…LALL), 114–134 (ASVI…ADWL), 144–164 (LNWK…VPGT), 187–207 (FSFL…LLEV), 218–238 (GFLI…HFFL), and 244–264 (VGMW…YAVL).

It belongs to the UppP family.

Its subcellular location is the cell inner membrane. It catalyses the reaction di-trans,octa-cis-undecaprenyl diphosphate + H2O = di-trans,octa-cis-undecaprenyl phosphate + phosphate + H(+). Functionally, catalyzes the dephosphorylation of undecaprenyl diphosphate (UPP). Confers resistance to bacitracin. The polypeptide is Undecaprenyl-diphosphatase (Marinobacter nauticus (strain ATCC 700491 / DSM 11845 / VT8) (Marinobacter aquaeolei)).